Reading from the N-terminus, the 476-residue chain is NADH-quinone oxidoreductase subunit N (476 aa).

A run of 14 helical transmembrane segments spans residues 8-28 (ITTE…GLLV), 35-55 (GLGS…IINW), 71-91 (YATF…LGSF), 102-122 (FEYY…ASAG), 124-144 (FITL…LVAF), 159-179 (ILLA…VYGA), 201-221 (LIVG…AVPF), 239-259 (FLAV…FAGG), 267-287 (WTLL…LVAI), 295-315 (MLAY…VSAT), 322-342 (VMFY…VVAI), 366-386 (ASVM…AGFV), 405-425 (LGLI…LVMF), and 437-457 (VGGA…ILGI).

Belongs to the complex I subunit 2 family. NDH-1 is composed of 14 different subunits. Subunits NuoA, H, J, K, L, M, N constitute the membrane sector of the complex.

The protein localises to the cell membrane. The enzyme catalyses a quinone + NADH + 5 H(+)(in) = a quinol + NAD(+) + 4 H(+)(out). In terms of biological role, NDH-1 shuttles electrons from NADH, via FMN and iron-sulfur (Fe-S) centers, to quinones in the respiratory chain. The immediate electron acceptor for the enzyme in this species is believed to be a menaquinone. Couples the redox reaction to proton translocation (for every two electrons transferred, four hydrogen ions are translocated across the cytoplasmic membrane), and thus conserves the redox energy in a proton gradient. The protein is NADH-quinone oxidoreductase subunit N of Desulforamulus reducens (strain ATCC BAA-1160 / DSM 100696 / MI-1) (Desulfotomaculum reducens).